The primary structure comprises 91 residues: Probable translocation protein y4yM (91 aa).

The next 2 helical transmembrane spans lie at 15–35 (VVFM…GLTI) and 55–75 (LLVV…PLIE).

This sequence belongs to the FliQ/MopD/SpaQ family.

The protein localises to the cell membrane. Its function is as follows. Could be involved in the secretion of an unknown factor. The sequence is that of Probable translocation protein y4yM from Sinorhizobium fredii (strain NBRC 101917 / NGR234).